The chain runs to 151 residues: UPF0178 protein YaiI (151 aa).

Belongs to the UPF0178 family.

This is UPF0178 protein YaiI from Salmonella arizonae (strain ATCC BAA-731 / CDC346-86 / RSK2980).